The primary structure comprises 251 residues: Imidazole glycerol phosphate synthase subunit HisF (251 aa).

Active-site residues include Asp-11 and Asp-130.

Belongs to the HisA/HisF family. As to quaternary structure, heterodimer of HisH and HisF.

The protein localises to the cytoplasm. The enzyme catalyses 5-[(5-phospho-1-deoxy-D-ribulos-1-ylimino)methylamino]-1-(5-phospho-beta-D-ribosyl)imidazole-4-carboxamide + L-glutamine = D-erythro-1-(imidazol-4-yl)glycerol 3-phosphate + 5-amino-1-(5-phospho-beta-D-ribosyl)imidazole-4-carboxamide + L-glutamate + H(+). The protein operates within amino-acid biosynthesis; L-histidine biosynthesis; L-histidine from 5-phospho-alpha-D-ribose 1-diphosphate: step 5/9. In terms of biological role, IGPS catalyzes the conversion of PRFAR and glutamine to IGP, AICAR and glutamate. The HisF subunit catalyzes the cyclization activity that produces IGP and AICAR from PRFAR using the ammonia provided by the HisH subunit. The protein is Imidazole glycerol phosphate synthase subunit HisF of Chlorobium phaeobacteroides (strain DSM 266 / SMG 266 / 2430).